We begin with the raw amino-acid sequence, 70 residues long: Gas vesicle protein A (70 aa).

Belongs to the gas vesicle GvpA family. The gas vesicle shell is 2 nm thick and consists of a single layer of this protein. It forms helical ribs nearly perpendicular to the long axis of the vesicle.

It is found in the gas vesicle shell. In terms of biological role, gas vesicles are hollow, gas filled proteinaceous nanostructures found in some microorganisms. During planktonic growth they allow positioning of the organism at a favorable depth for light or nutrient acquisition. GvpA forms the protein shell. The polypeptide is Gas vesicle protein A (Cereibacter sphaeroides (strain ATCC 17023 / DSM 158 / JCM 6121 / CCUG 31486 / LMG 2827 / NBRC 12203 / NCIMB 8253 / ATH 2.4.1.) (Rhodobacter sphaeroides)).